We begin with the raw amino-acid sequence, 152 residues long: Putative polyketide cyclase (152 aa).

To polyketide cyclases.

It participates in antibiotic biosynthesis; curamycin biosynthesis. In Streptomyces cyaneus (Streptomyces curacoi), this protein is Putative polyketide cyclase (curF).